A 235-amino-acid chain; its full sequence is Purine nucleoside phosphorylase DeoD-type (235 aa).

His4 contacts a purine D-ribonucleoside. Residues Gly20, Arg24, Arg43, and 87–90 contribute to the phosphate site; that span reads RVGT. A purine D-ribonucleoside is bound by residues 179–181 and 203–204; these read EME and SN.

It belongs to the PNP/UDP phosphorylase family. In terms of assembly, homohexamer; trimer of homodimers.

The catalysed reaction is a purine D-ribonucleoside + phosphate = a purine nucleobase + alpha-D-ribose 1-phosphate. The enzyme catalyses a purine 2'-deoxy-D-ribonucleoside + phosphate = a purine nucleobase + 2-deoxy-alpha-D-ribose 1-phosphate. Its function is as follows. Catalyzes the reversible phosphorolytic breakdown of the N-glycosidic bond in the beta-(deoxy)ribonucleoside molecules, with the formation of the corresponding free purine bases and pentose-1-phosphate. The polypeptide is Purine nucleoside phosphorylase DeoD-type (Levilactobacillus brevis (strain ATCC 367 / BCRC 12310 / CIP 105137 / JCM 1170 / LMG 11437 / NCIMB 947 / NCTC 947) (Lactobacillus brevis)).